The following is a 230-amino-acid chain: Tail fiber protein p36 (230 aa).

The distal half-fiber contains two molecules each of Gp36 and Gp37 and one molecule of Gp35.

It localises to the virion. Its function is as follows. Structural component of the distal-half tail fiber. This chain is Tail fiber protein p36 (36), found in Enterobacteria phage K3 (Bacteriophage K3).